We begin with the raw amino-acid sequence, 257 residues long: Hydroxyacylglutathione hydrolase (257 aa).

7 residues coordinate Zn(2+): His54, His56, Asp58, His59, His113, Asp137, and His175.

The protein belongs to the metallo-beta-lactamase superfamily. Glyoxalase II family. As to quaternary structure, monomer. Zn(2+) is required as a cofactor.

It catalyses the reaction an S-(2-hydroxyacyl)glutathione + H2O = a 2-hydroxy carboxylate + glutathione + H(+). It participates in secondary metabolite metabolism; methylglyoxal degradation; (R)-lactate from methylglyoxal: step 2/2. Thiolesterase that catalyzes the hydrolysis of S-D-lactoyl-glutathione to form glutathione and D-lactic acid. The sequence is that of Hydroxyacylglutathione hydrolase from Synechocystis sp. (strain ATCC 27184 / PCC 6803 / Kazusa).